The primary structure comprises 106 residues: MNDSEFHQLADQLMLNIEETLDDFDGDADIDYETNGGVMTLSFENGTKIVINRQEPLHQVWLATKTGGYHFNYRDGVWLCDRSDRAFYPLLSEAASAQAGEEVKFA.

Belongs to the frataxin family.

Functionally, involved in iron-sulfur (Fe-S) cluster assembly. May act as a regulator of Fe-S biogenesis. This chain is Iron-sulfur cluster assembly protein CyaY, found in Serratia proteamaculans (strain 568).